The sequence spans 94 residues: Large ribosomal subunit protein bL27 (94 aa).

The propeptide occupies 1–9; it reads MLRLDLQFF.

This sequence belongs to the bacterial ribosomal protein bL27 family. As to quaternary structure, part of the 50S ribosomal subunit. The N-terminus is cleaved by ribosomal processing cysteine protease Prp.

Functionally, plays a role in sporulation at high temperatures. The sequence is that of Large ribosomal subunit protein bL27 (rpmA) from Bacillus subtilis (strain 168).